The following is a 126-amino-acid chain: MALLSKSFKQEYSLEKRKLISSKIRNRYKDRLPIIVERAANSDVPDINKKKFLAPSNMVITNFIMEIRKHLDDSDHNEQKAIFLFVNKNNLPPSSQLLSSIYDAHKDEDGFLYICYSGENTFGSDI.

The Phosphatidylethanolamine amidated glycine moiety is linked to residue Gly123. Positions 124 to 126 (SDI) are cleaved as a propeptide — removed in mature form.

Belongs to the ATG8 family.

It localises to the membrane. This is Autophagy-related protein 8-like protein DDB_G0290491 from Dictyostelium discoideum (Social amoeba).